The chain runs to 134 residues: D-dopachrome decarboxylase-like protein (134 aa).

It belongs to the MIF family.

It localises to the cytoplasm. May have lyase activity. In Homo sapiens (Human), this protein is D-dopachrome decarboxylase-like protein (DDTL).